A 152-amino-acid chain; its full sequence is Putative superoxide dismutase [Cu-Zn] (152 aa).

Residues H43, H45, and H60 each coordinate Cu cation. Cysteines 54 and 144 form a disulfide. 4 residues coordinate Zn(2+): H60, H68, H77, and D80. Residue H118 coordinates Cu cation.

Belongs to the Cu-Zn superoxide dismutase family. Cu cation is required as a cofactor. It depends on Zn(2+) as a cofactor.

It carries out the reaction 2 superoxide + 2 H(+) = H2O2 + O2. Its function is as follows. Destroys radicals which are normally produced within the cells and which are toxic to biological systems. In Orgyia pseudotsugata (Douglas-fir tussock moth), this protein is Putative superoxide dismutase [Cu-Zn] (SOD).